A 225-amino-acid chain; its full sequence is Perlwapin-like protein (225 aa).

The first 19 residues, 1 to 19 (MNHLWLFIVTVSCIYLVYG), serve as a signal peptide directing secretion. Cystine bridges form between C27-C57, C36-C61, C43-C56, and C49-C65. Positions 27–68 (CKVKFMGTACPLGRLVCEEDGDCLGVNQVCCYDGCGTTCHNK) constitute a WAP 1; atypical domain. N67 carries N-linked (GlcNAc...) asparagine glycosylation. The region spanning 117 to 169 (IIPSPELLCPVVTVRYAFCRFSTYTPCHTSNDCAVPGMKCCPDVCGKRCKFPI) is the WAP 2 domain. Intrachain disulfides connect C125/C157, C135/C161, C143/C156, and C149/C165. N-linked (GlcNAc...) asparagine glycosylation is present at N170. Positions 176-225 (QFQQTPLKPTVPLPQYQQTPLQPTVPSSQPPLQPTVPSPQSYNYKGACST) are disordered. Over residues 188-201 (LPQYQQTPLQPTVP) the composition is skewed to low complexity. Over residues 203-212 (SQPPLQPTVP) the composition is skewed to pro residues. Polar residues predominate over residues 213–225 (SPQSYNYKGACST).

In terms of tissue distribution, component of the acid-soluble organic matrix of calcified layers of the shell (at protein level).

It localises to the secreted. The polypeptide is Perlwapin-like protein (Lottia gigantea (Giant owl limpet)).